Here is a 153-residue protein sequence, read N- to C-terminus: Histone H2B.3 (153 aa).

Basic and acidic residues-rich tracts occupy residues 1 to 28 (MAPK…EKAP) and 36 to 53 (EKRL…EGRK). Residues 1–61 (MAPKAEKKPA…RKAGRKKAKK (61 aa)) are disordered. Residues Lys-7 and Lys-37 each carry the N6-acetyllysine modification. A Glycyl lysine isopeptide (Lys-Gly) (interchain with G-Cter in ubiquitin) cross-link involves residue Lys-149.

This sequence belongs to the histone H2B family. The nucleosome is a histone octamer containing two molecules each of H2A, H2B, H3 and H4 assembled in one H3-H4 heterotetramer and two H2A-H2B heterodimers. The octamer wraps approximately 147 bp of DNA. Can be acetylated to form H2BK6ac and H2BK33ac. In terms of processing, monoubiquitinated by BRE1 to form H2BK143ub1 and deubiquitinated by UBP26. Required for heterochromatic histone H3 di- and trimethylation at H3K4me. May give a specific tag for epigenetic transcriptional activation.

It localises to the nucleus. The protein localises to the chromosome. Its function is as follows. Core component of nucleosome. Nucleosomes wrap and compact DNA into chromatin, limiting DNA accessibility to the cellular machineries which require DNA as a template. Histones thereby play a central role in transcription regulation, DNA repair, DNA replication and chromosomal stability. DNA accessibility is regulated via a complex set of post-translational modifications of histones, also called histone code, and nucleosome remodeling. The sequence is that of Histone H2B.3 (H2B.3) from Oryza sativa subsp. japonica (Rice).